A 160-amino-acid chain; its full sequence is SsrA-binding protein (160 aa).

Positions 133 to 160 (KKEHDKREDLKEREWQRDKERMMKNKGR) are disordered.

It belongs to the SmpB family.

The protein resides in the cytoplasm. Required for rescue of stalled ribosomes mediated by trans-translation. Binds to transfer-messenger RNA (tmRNA), required for stable association of tmRNA with ribosomes. tmRNA and SmpB together mimic tRNA shape, replacing the anticodon stem-loop with SmpB. tmRNA is encoded by the ssrA gene; the 2 termini fold to resemble tRNA(Ala) and it encodes a 'tag peptide', a short internal open reading frame. During trans-translation Ala-aminoacylated tmRNA acts like a tRNA, entering the A-site of stalled ribosomes, displacing the stalled mRNA. The ribosome then switches to translate the ORF on the tmRNA; the nascent peptide is terminated with the 'tag peptide' encoded by the tmRNA and targeted for degradation. The ribosome is freed to recommence translation, which seems to be the essential function of trans-translation. The protein is SsrA-binding protein of Tolumonas auensis (strain DSM 9187 / NBRC 110442 / TA 4).